We begin with the raw amino-acid sequence, 927 residues long: Disks large homolog 1 (927 aa).

Positions 4–64 (RKQDTQRALH…FYEVTLLDNP (61 aa)) constitute an L27 domain. The residue at position 115 (Thr115) is a Phosphothreonine. 3 positions are modified to phosphoserine: Ser122, Ser138, and Ser158. Positions 162–212 (PTEAVPPSSPTVPVIPVLPVPAENTVILPTIPQANPPPVLVNTDSLETSTY) are interaction with SH3 domains. The tract at residues 224 to 546 (EITLERGNSG…QAVTIVAQYR (323 aa)) is required for interaction with MARCHF2. PDZ domains lie at 230-317 (GNSG…SEKI), 325-412 (GPKG…YMND), and 474-555 (TGLG…RFEA). Phosphoserine is present on Ser232. A Phosphotyrosine modification is found at Tyr399. Phosphoserine occurs at positions 568, 573, 575, 579, 598, 619, 707, 710, and 857. An SH3 domain is found at 581–651 (KRSLYVRALF…PSKRRVEKKE (71 aa)). In terms of domain architecture, Guanylate kinase-like spans 683–858 (RKFPFYKNKD…ISIFIKPKSM (176 aa)). The disordered stretch occupies residues 691–719 (KDQSEQETSDADQHITSNASDSESSYRGQ). A compositionally biased stretch (polar residues) spans 704 to 717 (HITSNASDSESSYR).

This sequence belongs to the MAGUK family. As to quaternary structure, homotetramer. Interacts (via guanylate kinase-like domain) with DLGAP1, DLGAP2, DLGAP3, DLGAP4 and MAP1A. Interacts (via guanylate kinase-like domain) with KIF13B. May interact with HTR2A. Interacts (via PDZ domains) with GRIA1. Interacts (via PDZ domains) with GRIN2A. Interacts (via PDZ domains) with KCND2 and KCND3. Interacts (via PDZ domains) with KCNA1, KCNA2, KCNA3 and KCNA4. Interacts (via PDZ domains) with ADGRA3. Interacts with KCNF1. Interacts with CAMK2. Interacts with cytoskeleton-associated protein EPB41. Interacts with cytoskeleton-associated protein EZR. Found in a complex with KCNA5 and CAV3. Found in a complex with APC and CTNNB1. Interacts (via PDZ domains) with APC. Interacts with CDH1 through binding to PIK3R1. Forms multiprotein complexes with CASK, LIN7A, LIN7B, LIN7C, APBA1, and KCNJ12. Interacts with TOPK. Forms a tripartite complex composed of DLG1, MPP7 and LIN7 (LIN7A or LIN7C). May interact with TJAP1. Interacts with PTEN. Interacts with FRMPD4 (via C-terminus). Interacts with LRFN1, LRFN2 and LRFN4. Interacts with SFPQ. Interacts (via PDZ domains) with ADGRA2 (via PDZ-binding motif). Interacts with ADAM10; this interaction recruits ADAM10 to the cell membrane during long-term depression in hippocampal neurons. Interacts with DGKI (via PDZ-binding motif). Interacts (via PDZ domains) with MARCHF2 (via PDZ domain); the interaction leads to DLG1 ubiqtuitination and degradation. Interacts (via N-terminus) with MPP3; this interaction connects CADM1 with DLG1 and links CADM1 with the regulatory subunit of phosphoinositide-3-kinase (PI3K) by forming a multiprotein complex and participates in cell spreading. Phosphorylated by MAPK12. Phosphorylation of Ser-232 regulates association with GRIN2A. Post-translationally, ubiquitinated; by MARCHF2 which results in its degradation.

The protein localises to the cell membrane. It is found in the basolateral cell membrane. Its subcellular location is the endoplasmic reticulum membrane. It localises to the postsynaptic density. The protein resides in the synapse. The protein localises to the sarcolemma. It is found in the apical cell membrane. Its subcellular location is the cell junction. It localises to the cytoplasm. Essential multidomain scaffolding protein required for normal development. Recruits channels, receptors and signaling molecules to discrete plasma membrane domains in polarized cells. Promotes epithelial cell layer barrier function via maintaining cell-cell adhesion. May also play a role in adherens junction assembly, signal transduction, cell proliferation, synaptogenesis and lymphocyte activation. Regulates the excitability of cardiac myocytes by modulating the functional expression of Kv4 channels. Functional regulator of Kv1.5 channel. During long-term depression in hippocampal neurons, it recruits ADAM10 to the plasma membrane. This is Disks large homolog 1 (DLG1) from Canis lupus familiaris (Dog).